The chain runs to 116 residues: MRVKTGVVRRRRHKKVLKLARGFYSGRRKHFRKAKEQLERSMYYAFRDRKQKKREFRSLWVVRINAACRMHNTSYSRFMHALKVANIELDRKVLADMAMNDMQAFKSVLESVKEHL.

Belongs to the bacterial ribosomal protein bL20 family.

Binds directly to 23S ribosomal RNA and is necessary for the in vitro assembly process of the 50S ribosomal subunit. It is not involved in the protein synthesizing functions of that subunit. This is Large ribosomal subunit protein bL20 from Helicobacter pylori (strain HPAG1).